The sequence spans 294 residues: Farnesyl diphosphate synthase (294 aa).

Isopentenyl diphosphate is bound by residues K45, R48, and H77. The Mg(2+) site is built by D84 and D90. R95 lines the (2E)-geranyl diphosphate pocket. Position 96 (R96) interacts with isopentenyl diphosphate. Positions 181, 182, and 220 each coordinate (2E)-geranyl diphosphate.

Belongs to the FPP/GGPP synthase family. The cofactor is Mg(2+).

It localises to the cytoplasm. It catalyses the reaction isopentenyl diphosphate + (2E)-geranyl diphosphate = (2E,6E)-farnesyl diphosphate + diphosphate. This Buchnera aphidicola subsp. Schizaphis graminum (strain Sg) protein is Farnesyl diphosphate synthase (ispA).